The primary structure comprises 445 residues: Probable cytosol aminopeptidase (445 aa).

Residues Lys-217 and Asp-222 each contribute to the Mn(2+) site. The active site involves Lys-229. 3 residues coordinate Mn(2+): Asp-240, Asp-299, and Glu-301. Residue Arg-303 is part of the active site.

This sequence belongs to the peptidase M17 family. Mn(2+) is required as a cofactor.

It is found in the cytoplasm. The enzyme catalyses Release of an N-terminal amino acid, Xaa-|-Yaa-, in which Xaa is preferably Leu, but may be other amino acids including Pro although not Arg or Lys, and Yaa may be Pro. Amino acid amides and methyl esters are also readily hydrolyzed, but rates on arylamides are exceedingly low.. It carries out the reaction Release of an N-terminal amino acid, preferentially leucine, but not glutamic or aspartic acids.. Functionally, presumably involved in the processing and regular turnover of intracellular proteins. Catalyzes the removal of unsubstituted N-terminal amino acids from various peptides. This chain is Probable cytosol aminopeptidase (pepA), found in Mycoplasma pneumoniae (strain ATCC 29342 / M129 / Subtype 1) (Mycoplasmoides pneumoniae).